The sequence spans 487 residues: E3 ubiquitin-protein ligase RNF8 (487 aa).

Residues 38–92 enclose the FHA domain; it reads VTIGRGFSVTYQLISKVCPLMISRNHCVLKQNPEGQWTIMDNKSLNGVWLNRERL. Residues 68 to 72 are required for interaction with PIWIL1; sequence QNPEG. Residues 135-195 form a disordered region; sequence CLAPKNDHTT…PEKLHGKGEA (61 aa). Ser157 is modified (phosphoserine). A compositionally biased stretch (basic and acidic residues) spans 184 to 193; the sequence is AEPEKLHGKG. The segment at 405–443 adopts an RING-type zinc-finger fold; the sequence is CIICSEYFIEAVTLNCAHSFCSFCISEWMKRKVECPICR.

Belongs to the RNF8 family. In terms of assembly, homodimer. Forms a E2-E3 ubiquitin ligase complex composed of the RNF8 homodimer and a E2 heterodimer of UBE2N and UBE2V2. Interacts with class III E2s, including UBE2E1, UBE2E2, and UBE2E3 and with UBE2N. Interacts with RXRA. Interacts (via FHA domain) with phosphorylated HERC2 (via C-terminus). Interacts with PIWIL1; leading to sequester RNF8 in the cytoplasm. Interacts with WRAP53/TCAB1. Post-translationally, autoubiquitinated through 'Lys-48' and 'Lys-63' of ubiquitin. 'Lys-63' polyubiquitination is mediated by UBE2N. 'Lys-29'-type polyubiquitination is also observed, but it doesn't require its own functional RING-type zinc finger.

The protein resides in the nucleus. The protein localises to the cytoplasm. Its subcellular location is the midbody. It is found in the chromosome. It localises to the telomere. It carries out the reaction S-ubiquitinyl-[E2 ubiquitin-conjugating enzyme]-L-cysteine + [acceptor protein]-L-lysine = [E2 ubiquitin-conjugating enzyme]-L-cysteine + N(6)-ubiquitinyl-[acceptor protein]-L-lysine.. It functions in the pathway protein modification; protein ubiquitination. In terms of biological role, E3 ubiquitin-protein ligase that plays a key role in DNA damage signaling via 2 distinct roles: by mediating the 'Lys-63'-linked ubiquitination of histones H2A and H2AX and promoting the recruitment of DNA repair proteins at double-strand breaks (DSBs) sites, and by catalyzing 'Lys-48'-linked ubiquitination to remove target proteins from DNA damage sites. Following DNA DSBs, it is recruited to the sites of damage by ATM-phosphorylated MDC1 and catalyzes the 'Lys-63'-linked ubiquitination of histones H2A and H2AX, thereby promoting the formation of TP53BP1 and BRCA1 ionizing radiation-induced foci (IRIF). Also controls the recruitment of UIMC1-BRCC3 (RAP80-BRCC36) and PAXIP1/PTIP to DNA damage sites. Promotes the recruitment of NBN to DNA damage sites by catalyzing 'Lys-6'-linked ubiquitination of NBN. Also recruited at DNA interstrand cross-links (ICLs) sites and catalyzes 'Lys-63'-linked ubiquitination of histones H2A and H2AX, leading to recruitment of FAAP20 and Fanconi anemia (FA) complex, followed by interstrand cross-link repair. H2A ubiquitination also mediates the ATM-dependent transcriptional silencing at regions flanking DSBs in cis, a mechanism to avoid collision between transcription and repair intermediates. Promotes the formation of 'Lys-63'-linked polyubiquitin chains via interactions with the specific ubiquitin-conjugating UBE2N/UBC13 and ubiquitinates non-histone substrates such as PCNA. Substrates that are polyubiquitinated at 'Lys-63' are usually not targeted for degradation. Also catalyzes the formation of 'Lys-48'-linked polyubiquitin chains via interaction with the ubiquitin-conjugating UBE2L6/UBCH8, leading to degradation of substrate proteins such as CHEK2, JMJD2A/KDM4A and KU80/XRCC5: it is still unclear how the preference toward 'Lys-48'- versus 'Lys-63'-linked ubiquitination is regulated but it could be due to RNF8 ability to interact with specific E2 specific ligases. For instance, interaction with phosphorylated HERC2 promotes the association between RNF8 and UBE2N/UBC13 and favors the specific formation of 'Lys-63'-linked ubiquitin chains. Promotes non-homologous end joining (NHEJ) by promoting the 'Lys-48'-linked ubiquitination and degradation the of KU80/XRCC5. Following DNA damage, mediates the ubiquitination and degradation of JMJD2A/KDM4A in collaboration with RNF168, leading to unmask H4K20me2 mark and promote the recruitment of TP53BP1 at DNA damage sites. Following DNA damage, mediates the ubiquitination and degradation of POLD4/p12, a subunit of DNA polymerase delta. In the absence of POLD4, DNA polymerase delta complex exhibits higher proofreading activity. In addition to its function in damage signaling, also plays a role in higher-order chromatin structure by mediating extensive chromatin decondensation. Involved in the activation of ATM by promoting histone H2B ubiquitination, which indirectly triggers histone H4 'Lys-16' acetylation (H4K16ac), establishing a chromatin environment that promotes efficient activation of ATM kinase. Required in the testis, where it plays a role in the replacement of histones during spermatogenesis. At uncapped telomeres, promotes the joining of deprotected chromosome ends by inducing H2A ubiquitination and TP53BP1 recruitment, suggesting that it may enhance cancer development by aggravating telomere-induced genome instability in case of telomeric crisis. Promotes the assembly of RAD51 at DNA DSBs in the absence of BRCA1 and TP53BP1 Also involved in class switch recombination in immune system, via its role in regulation of DSBs repair. May be required for proper exit from mitosis after spindle checkpoint activation and may regulate cytokinesis. May play a role in the regulation of RXRA-mediated transcriptional activity. Not involved in RXRA ubiquitination by UBE2E2. The polypeptide is E3 ubiquitin-protein ligase RNF8 (Rattus norvegicus (Rat)).